We begin with the raw amino-acid sequence, 400 residues long: MRSKFMSSPTLSDLGKREATAAAALDERGTQQKRAGANATWNSIQNGVISVFQKKGLADHELYSLNEGVRQLLKTELGSFFTEYLQNQLLTKGMVILRDKIRFYEGQKLLDSLAETWDFFFSDILPMLQAIFYPVQGKEPSIRQLALLHFRNIITLNLKLDDALSRPRARVPPSIIQMLLILQGVHESKGVTEEYMNLESLIQKVVSPYLGTYGLYSNEAPFCHSSCILEKRMFRRCPKSGEILTKNPVVRSKSYNNPLLTPVAEYEMENLVANGSGIRRHSVSEMTSVLELPMGYSNLTTDSTSKLSMAGTKPPGEGERPPISNGQFPPLHNLSDSQQGLYNSQRDSPLLPAPSSSPETIVDQILESIDSDSEGIFIDFGRGCSKSPEFSMEIGRQSLV.

The segment at 301–358 is disordered; sequence TDSTSKLSMAGTKPPGEGERPPISNGQFPPLHNLSDSQQGLYNSQRDSPLLPAPSSSP. Residues 334 to 347 show a composition bias toward polar residues; the sequence is LSDSQQGLYNSQRD. A compositionally biased stretch (low complexity) spans 348 to 358; that stretch reads SPLLPAPSSSP.

Belongs to the PROTOR family. As to quaternary structure, associated component of the mechanistic target of rapamycin complex 2 (mTORC2).

Functionally, associated subunit of mTORC2, which regulates cell growth and survival in response to hormonal signals. In Xenopus laevis (African clawed frog), this protein is Proline-rich protein 5 (prr5).